The following is a 297-amino-acid chain: Protoheme IX farnesyltransferase (297 aa).

A run of 9 helical transmembrane segments spans residues P12–G32, Y36–F56, V85–A105, L108–M128, V133–A153, L163–F183, I209–A229, G230–Q250, and F266–V286.

Belongs to the UbiA prenyltransferase family. Protoheme IX farnesyltransferase subfamily.

Its subcellular location is the cell inner membrane. It catalyses the reaction heme b + (2E,6E)-farnesyl diphosphate + H2O = Fe(II)-heme o + diphosphate. The protein operates within porphyrin-containing compound metabolism; heme O biosynthesis; heme O from protoheme: step 1/1. In terms of biological role, converts heme B (protoheme IX) to heme O by substitution of the vinyl group on carbon 2 of heme B porphyrin ring with a hydroxyethyl farnesyl side group. In Sodalis glossinidius (strain morsitans), this protein is Protoheme IX farnesyltransferase.